The sequence spans 921 residues: Phototropin-1B (921 aa).

Gly residues predominate over residues 1–11 (MASKGTEGGHG). Disordered stretches follow at residues 1–59 (MASK…SPFL) and 88–118 (TGLPQGVSARPSSGSARTSSEDNPQQQQSAA). A compositionally biased stretch (low complexity) spans 40–51 (SSASSFRTAAAA). The span at 97–117 (RPSSGSARTSSEDNPQQQQSA) shows a compositional bias: polar residues. The PAS 1 domain occupies 123–197 (VSEELRAALS…KIRQSLANGS (75 aa)). FMN is bound by residues 172-177 (NCRFLQ), arginine 190, asparagine 205, asparagine 215, and glutamine 236. Cysteine 173 carries the S-4a-FMN cysteine modification. Residues 197 to 251 (SNYCGRILNYKKDGTPFWNLLTIAPIKDEDGRLLKFIGMQVEVSKYTEGKKDTVV) form the PAC 1 domain. A compositionally biased stretch (polar residues) spans 286–295 (RSLSESSNNT). 2 disordered regions span residues 286–345 (RSLS…QVNR) and 366–391 (EKNMLKPRDEDPLIDSDDERPESFED). Basic and acidic residues-rich tracts occupy residues 312–321 (PSKRSSESGS) and 366–376 (EKNMLKPRDED). The PAS 2 domain occupies 400-473 (RGIDLATTLE…RKIRDAIDNQ (74 aa)). Residues 449 to 454 (NCRFLQ), arginine 467, asparagine 482, asparagine 492, and glutamine 513 each bind FMN. Cysteine 450 carries the S-4a-FMN cysteine modification. One can recognise a PAC 2 domain in the interval 474 to 528 (AEVTVQLINYTKSGKKFWNLFHLQPMRDQKGDVQYFIGVQLDGTEHVQDDAAKEG). Residues 594–881 (FRPVKPLGSG…ANEIKGHPFF (288 aa)) enclose the Protein kinase domain. ATP is bound by residues 600–608 (LGSGDTGSV) and lysine 623. The active-site Proton acceptor is aspartate 719.

It belongs to the protein kinase superfamily. Ser/Thr protein kinase family. In terms of assembly, homodimer. FMN serves as cofactor. Autophosphorylated in response to blue light irradiation. In terms of processing, 2 molecules of FMN bind covalently to cysteines after exposure to blue light and are reversed in the dark.

It carries out the reaction L-seryl-[protein] + ATP = O-phospho-L-seryl-[protein] + ADP + H(+). The enzyme catalyses L-threonyl-[protein] + ATP = O-phospho-L-threonyl-[protein] + ADP + H(+). Its function is as follows. Protein kinase that acts as a blue light photoreceptor in a signal-transduction pathway for phototropic responses. Regulates a wide range of physiological activities in plants that maximize the efficiency of photosynthesis, such as chloroplast relocations, stomata opening, and leaf expansion. In Oryza sativa subsp. japonica (Rice), this protein is Phototropin-1B (PHOT1B).